The primary structure comprises 64 residues: Translation machinery-associated protein 7 homolog (64 aa).

The disordered stretch occupies residues 1–64 (MSGRQGGKAK…GGGIKKSGKK (64 aa)). Residues 21-50 (DLSEEDVEFKKKQQEEAKKIKEMAAKAGQR) adopt a coiled-coil conformation. The segment covering 28-44 (EFKKKQQEEAKKIKEMA) has biased composition (basic and acidic residues). Residues 53–64 (LLGGGIKKSGKK) show a composition bias toward gly residues.

The protein belongs to the TMA7 family.

This Caenorhabditis briggsae protein is Translation machinery-associated protein 7 homolog.